A 401-amino-acid polypeptide reads, in one-letter code: tRNA-specific 2-thiouridylase MnmA (401 aa).

Residues Gly13–Ser20 and Met39 contribute to the ATP site. The interval Asn99–Asp101 is interaction with target base in tRNA. Cys104 functions as the Nucleophile in the catalytic mechanism. Residues Cys104 and Cys202 are joined by a disulfide bond. Gly128 contacts ATP. Residues Lys152–Gln154 are interaction with tRNA. Cys202 functions as the Cysteine persulfide intermediate in the catalytic mechanism. Residues Arg329–Tyr330 are interaction with tRNA.

This sequence belongs to the MnmA/TRMU family.

Its subcellular location is the cytoplasm. It carries out the reaction S-sulfanyl-L-cysteinyl-[protein] + uridine(34) in tRNA + AH2 + ATP = 2-thiouridine(34) in tRNA + L-cysteinyl-[protein] + A + AMP + diphosphate + H(+). In terms of biological role, catalyzes the 2-thiolation of uridine at the wobble position (U34) of tRNA, leading to the formation of s(2)U34. This Polaromonas sp. (strain JS666 / ATCC BAA-500) protein is tRNA-specific 2-thiouridylase MnmA.